Consider the following 417-residue polypeptide: NADH-quinone oxidoreductase subunit D (417 aa).

The protein belongs to the complex I 49 kDa subunit family. NDH-1 is composed of 14 different subunits. Subunits NuoB, C, D, E, F, and G constitute the peripheral sector of the complex.

The protein localises to the cell inner membrane. The enzyme catalyses a quinone + NADH + 5 H(+)(in) = a quinol + NAD(+) + 4 H(+)(out). In terms of biological role, NDH-1 shuttles electrons from NADH, via FMN and iron-sulfur (Fe-S) centers, to quinones in the respiratory chain. The immediate electron acceptor for the enzyme in this species is believed to be ubiquinone. Couples the redox reaction to proton translocation (for every two electrons transferred, four hydrogen ions are translocated across the cytoplasmic membrane), and thus conserves the redox energy in a proton gradient. This is NADH-quinone oxidoreductase subunit D from Nitrosomonas europaea (strain ATCC 19718 / CIP 103999 / KCTC 2705 / NBRC 14298).